A 360-amino-acid chain; its full sequence is Phosphoserine aminotransferase (360 aa).

Position 42 (Arg-42) interacts with L-glutamate. Pyridoxal 5'-phosphate contacts are provided by residues 76 to 77 (AS), Trp-102, Thr-152, Asp-172, and Gln-195. Residue Lys-196 is modified to N6-(pyridoxal phosphate)lysine. Position 237-238 (237-238 (NT)) interacts with pyridoxal 5'-phosphate.

The protein belongs to the class-V pyridoxal-phosphate-dependent aminotransferase family. SerC subfamily. Homodimer. It depends on pyridoxal 5'-phosphate as a cofactor.

The protein resides in the cytoplasm. The catalysed reaction is O-phospho-L-serine + 2-oxoglutarate = 3-phosphooxypyruvate + L-glutamate. It carries out the reaction 4-(phosphooxy)-L-threonine + 2-oxoglutarate = (R)-3-hydroxy-2-oxo-4-phosphooxybutanoate + L-glutamate. The protein operates within amino-acid biosynthesis; L-serine biosynthesis; L-serine from 3-phospho-D-glycerate: step 2/3. Its function is as follows. Catalyzes the reversible conversion of 3-phosphohydroxypyruvate to phosphoserine and of 3-hydroxy-2-oxo-4-phosphonooxybutanoate to phosphohydroxythreonine. In Bacillus thuringiensis subsp. konkukian (strain 97-27), this protein is Phosphoserine aminotransferase.